The chain runs to 649 residues: Echinoderm microtubule-associated protein-like 2 (649 aa).

Residues 10–649 (KEVIFSMEEG…DTSVLQWRVA (640 aa)) form a tandem atypical propeller in EMLs region. 12 WD repeats span residues 56–93 (KLDWVYGYRGRDCRANLYLLPTGEVVYFVASVAVLYSV), 97–144 (RQRH…VWDS), 151–192 (HVLG…VWDW), 195–234 (ESKVVDSKCSNEAVLVATFHPTDPSLLITCGKSHIYFWSL), 241–280 (KRQGLFEKHEKPKYVLCVTFLEGGDVVTGDSGGNLYVWGK), 285–323 (ITQEVQGAHDGGVFALCALRDGTLVSGGGRDRRVVLWGS), 369–406 (FSLLVQGHVEELWGLATHPSRAQFVTCGQDKLVHLWSS), 410–447 (QPVWSRSIEDPARSAGFHPSGSVLAVGTVTGRWLLLDT), 452–489 (LVAIHTDGNEQISVVSFSPDGAYLAVGSHDNLVYVYTV), 495–535 (KVSR…YWDP), 564–602 (FGIWPEGADGTDINAVARSHDGKLLVSADDFGKVHLFSY), and 609–648 (ALSHKYGGHSSHVTNVAFLWDDSMALTTGGKDTSVLQWRV). Positions 65–106 (GRDCRANLYLLPTGEVVYFVASVAVLYSVEEQRQRHYLGHND) form a coiled coil.

This sequence belongs to the WD repeat EMAP family. In terms of assembly, interacts with GRID2 and may also interact with GRID1. Interacts with EML3. Binds unpolymerized tubulins via its WD repeat region.

It localises to the cytoplasm. It is found in the cytoskeleton. Its subcellular location is the spindle. In terms of biological role, tubulin binding protein that inhibits microtubule nucleation and growth, resulting in shorter microtubules. This Mus musculus (Mouse) protein is Echinoderm microtubule-associated protein-like 2 (Eml2).